We begin with the raw amino-acid sequence, 233 residues long: Purine nucleoside phosphorylase DeoD-type (233 aa).

Position 4 (histidine 4) interacts with a purine D-ribonucleoside. Phosphate is bound by residues glycine 20, arginine 24, arginine 43, and 87 to 90 (RIGT). A purine D-ribonucleoside contacts are provided by residues 179-181 (EME) and 203-204 (SD). The active-site Proton donor is aspartate 204.

Belongs to the PNP/UDP phosphorylase family. As to quaternary structure, homohexamer; trimer of homodimers.

It carries out the reaction a purine D-ribonucleoside + phosphate = a purine nucleobase + alpha-D-ribose 1-phosphate. The catalysed reaction is a purine 2'-deoxy-D-ribonucleoside + phosphate = a purine nucleobase + 2-deoxy-alpha-D-ribose 1-phosphate. Catalyzes the reversible phosphorolytic breakdown of the N-glycosidic bond in the beta-(deoxy)ribonucleoside molecules, with the formation of the corresponding free purine bases and pentose-1-phosphate. The sequence is that of Purine nucleoside phosphorylase DeoD-type from Thermoanaerobacter pseudethanolicus (strain ATCC 33223 / 39E) (Clostridium thermohydrosulfuricum).